A 1574-amino-acid chain; its full sequence is Pentafunctional AROM polypeptide (1574 aa).

The interval 1 to 384 (MSCSNNTEPT…HEPRATTVED (384 aa)) is 3-dehydroquinate synthase. Residues 49 to 51 (DTN), 85 to 88 (EISK), 116 to 118 (GGV), and aspartate 121 each bind NAD(+). Arginine 132 serves as a coordination point for 7-phospho-2-dehydro-3-deoxy-D-arabino-heptonate. Residue 141-142 (TT) participates in NAD(+) binding. Residues aspartate 148 and lysine 154 each coordinate 7-phospho-2-dehydro-3-deoxy-D-arabino-heptonate. NAD(+) is bound at residue lysine 163. 7-phospho-2-dehydro-3-deoxy-D-arabino-heptonate is bound at residue asparagine 164. Residues 181 to 184 (FLET) and asparagine 192 contribute to the NAD(+) site. Glutamate 196 is a binding site for Zn(2+). Residues 196–199 (EVIK) and lysine 250 contribute to the 7-phospho-2-dehydro-3-deoxy-D-arabino-heptonate site. The active-site Proton acceptor; for 3-dehydroquinate synthase activity is glutamate 260. 7-phospho-2-dehydro-3-deoxy-D-arabino-heptonate is bound by residues 264-268 (RNLLN) and histidine 271. Residue histidine 271 coordinates Zn(2+). Histidine 275 (proton acceptor; for 3-dehydroquinate synthase activity) is an active-site residue. Positions 287 and 356 each coordinate 7-phospho-2-dehydro-3-deoxy-D-arabino-heptonate. Histidine 287 is a Zn(2+) binding site. An EPSP synthase region spans residues 397–837 (ITPGVSTKLA…WDTLSQSFGL (441 aa)). Catalysis depends on cysteine 819, which acts as the For EPSP synthase activity. The segment at 858–1052 (TRSVFIVGMR…TAKEQSFFVS (195 aa)) is shikimate kinase. Position 865–872 (865–872 (GMRGAGKT)) interacts with ATP. The tract at residues 1053 to 1266 (LTVPSVDSAV…AAPGQLSAAE (214 aa)) is 3-dehydroquinase. The Proton acceptor; for 3-dehydroquinate dehydratase activity role is filled by histidine 1169. The Schiff-base intermediate with substrate; for 3-dehydroquinate dehydratase activity role is filled by lysine 1197. Residues 1279 to 1574 (AQSFHLFGKP…NGDEIPTSTD (296 aa)) are shikimate dehydrogenase.

It in the N-terminal section; belongs to the sugar phosphate cyclases superfamily. Dehydroquinate synthase family. In the 2nd section; belongs to the EPSP synthase family. This sequence in the 3rd section; belongs to the shikimate kinase family. The protein in the 4th section; belongs to the type-I 3-dehydroquinase family. It in the C-terminal section; belongs to the shikimate dehydrogenase family. In terms of assembly, homodimer. The cofactor is Zn(2+).

It is found in the cytoplasm. The enzyme catalyses 7-phospho-2-dehydro-3-deoxy-D-arabino-heptonate = 3-dehydroquinate + phosphate. It carries out the reaction 3-dehydroquinate = 3-dehydroshikimate + H2O. It catalyses the reaction shikimate + NADP(+) = 3-dehydroshikimate + NADPH + H(+). The catalysed reaction is shikimate + ATP = 3-phosphoshikimate + ADP + H(+). The enzyme catalyses 3-phosphoshikimate + phosphoenolpyruvate = 5-O-(1-carboxyvinyl)-3-phosphoshikimate + phosphate. Its pathway is metabolic intermediate biosynthesis; chorismate biosynthesis; chorismate from D-erythrose 4-phosphate and phosphoenolpyruvate: step 2/7. It participates in metabolic intermediate biosynthesis; chorismate biosynthesis; chorismate from D-erythrose 4-phosphate and phosphoenolpyruvate: step 3/7. It functions in the pathway metabolic intermediate biosynthesis; chorismate biosynthesis; chorismate from D-erythrose 4-phosphate and phosphoenolpyruvate: step 4/7. The protein operates within metabolic intermediate biosynthesis; chorismate biosynthesis; chorismate from D-erythrose 4-phosphate and phosphoenolpyruvate: step 5/7. Its pathway is metabolic intermediate biosynthesis; chorismate biosynthesis; chorismate from D-erythrose 4-phosphate and phosphoenolpyruvate: step 6/7. Functionally, the AROM polypeptide catalyzes 5 consecutive enzymatic reactions in prechorismate polyaromatic amino acid biosynthesis. The protein is Pentafunctional AROM polypeptide of Verticillium alfalfae (strain VaMs.102 / ATCC MYA-4576 / FGSC 10136) (Verticillium wilt of alfalfa).